A 604-amino-acid polypeptide reads, in one-letter code: Sulfite reductase [NADPH] flavoprotein alpha-component (604 aa).

The region spanning 66-204 (VTVLSASQTG…AADGWTDNIA (139 aa)) is the Flavodoxin-like domain. Residues 72-77 (SQTGNA), 119-122 (STQG), and 155-164 (LGDSSYPNFC) each bind FMN. Residues 239-453 (ADPFPAALLA…VERNDGFRLP (215 aa)) form the FAD-binding FR-type domain. FAD-binding positions include threonine 327, glutamine 361, 391–394 (RLYS), 409–411 (TVG), and 424–427 (GGAS). Residues 524 to 525 (SR), 530 to 534 (KIYVQ), and aspartate 566 contribute to the NADP(+) site. Tyrosine 604 is an FAD binding site.

The protein belongs to the NADPH-dependent sulphite reductase flavoprotein subunit CysJ family. In the N-terminal section; belongs to the flavodoxin family. It in the C-terminal section; belongs to the flavoprotein pyridine nucleotide cytochrome reductase family. Alpha(8)-beta(8). The alpha component is a flavoprotein, the beta component is a hemoprotein. Requires FAD as cofactor. FMN is required as a cofactor.

The catalysed reaction is hydrogen sulfide + 3 NADP(+) + 3 H2O = sulfite + 3 NADPH + 4 H(+). The protein operates within sulfur metabolism; hydrogen sulfide biosynthesis; hydrogen sulfide from sulfite (NADPH route): step 1/1. Component of the sulfite reductase complex that catalyzes the 6-electron reduction of sulfite to sulfide. This is one of several activities required for the biosynthesis of L-cysteine from sulfate. The flavoprotein component catalyzes the electron flow from NADPH -&gt; FAD -&gt; FMN to the hemoprotein component. In Neisseria meningitidis serogroup A / serotype 4A (strain DSM 15465 / Z2491), this protein is Sulfite reductase [NADPH] flavoprotein alpha-component.